A 745-amino-acid polypeptide reads, in one-letter code: Double-stranded RNA-specific editase B2 (745 aa).

Disordered stretches follow at residues 1–35 (MASV…RKDK) and 50–104 (SPGT…PLEE). The segment covering 20–34 (CKSKRRRRRRSKRKD) has biased composition (basic residues). Residues 23–35 (KRRRRRRSKRKDK) are R-domain (ssRNA-binding). 2 DRBM domains span residues 125–191 (TPKN…SFVQ) and 283–347 (NPVV…ALFD). The A to I editase domain occupies 414 to 741 (VLSSGTKCIS…VRKPPEQDQF (328 aa)). A Zn(2+)-binding site is contributed by histidine 438. The active-site Proton donor is glutamate 440. Residues cysteine 496 and cysteine 561 each coordinate Zn(2+).

In terms of tissue distribution, brain specific.

The protein resides in the nucleus. Its function is as follows. Lacks editing activity. It prevents the binding of other ADAR enzymes to targets in vitro, and decreases the efficiency of these enzymes. Capable of binding to dsRNA but also to ssRNA. In Mus musculus (Mouse), this protein is Double-stranded RNA-specific editase B2 (Adarb2).